A 332-amino-acid polypeptide reads, in one-letter code: Anthranilate phosphoribosyltransferase (332 aa).

Residues G79, 82 to 83 (GD), S87, 89 to 92 (NIST), 107 to 115 (KHGNRSVSS), and S119 contribute to the 5-phospho-alpha-D-ribose 1-diphosphate site. G79 is an anthranilate binding site. Position 91 (S91) interacts with Mg(2+). N110 provides a ligand contact to anthranilate. R165 is an anthranilate binding site. Residues D223 and E224 each coordinate Mg(2+).

Belongs to the anthranilate phosphoribosyltransferase family. Homodimer. The cofactor is Mg(2+).

It catalyses the reaction N-(5-phospho-beta-D-ribosyl)anthranilate + diphosphate = 5-phospho-alpha-D-ribose 1-diphosphate + anthranilate. It participates in amino-acid biosynthesis; L-tryptophan biosynthesis; L-tryptophan from chorismate: step 2/5. Functionally, catalyzes the transfer of the phosphoribosyl group of 5-phosphorylribose-1-pyrophosphate (PRPP) to anthranilate to yield N-(5'-phosphoribosyl)-anthranilate (PRA). This chain is Anthranilate phosphoribosyltransferase, found in Sodalis glossinidius (strain morsitans).